The sequence spans 301 residues: UDP-N-acetylenolpyruvoylglucosamine reductase (301 aa).

The region spanning 30–194 is the FAD-binding PCMH-type domain; it reads VGGEADYLVF…LSVKFALAPG (165 aa). Arg173 is an active-site residue. The active-site Proton donor is Ser223. Glu293 is a catalytic residue.

The protein belongs to the MurB family. The cofactor is FAD.

The protein localises to the cytoplasm. The catalysed reaction is UDP-N-acetyl-alpha-D-muramate + NADP(+) = UDP-N-acetyl-3-O-(1-carboxyvinyl)-alpha-D-glucosamine + NADPH + H(+). Its pathway is cell wall biogenesis; peptidoglycan biosynthesis. Functionally, cell wall formation. This chain is UDP-N-acetylenolpyruvoylglucosamine reductase, found in Streptococcus pneumoniae (strain JJA).